Reading from the N-terminus, the 432-residue chain is Glutamate-1-semialdehyde 2,1-aminomutase (432 aa).

The residue at position 271 (Lys-271) is an N6-(pyridoxal phosphate)lysine.

It belongs to the class-III pyridoxal-phosphate-dependent aminotransferase family. HemL subfamily. In terms of assembly, homodimer. Requires pyridoxal 5'-phosphate as cofactor.

The protein resides in the cytoplasm. It catalyses the reaction (S)-4-amino-5-oxopentanoate = 5-aminolevulinate. The protein operates within porphyrin-containing compound metabolism; protoporphyrin-IX biosynthesis; 5-aminolevulinate from L-glutamyl-tRNA(Glu): step 2/2. It participates in porphyrin-containing compound metabolism; chlorophyll biosynthesis. This chain is Glutamate-1-semialdehyde 2,1-aminomutase, found in Prochlorococcus marinus (strain NATL2A).